The chain runs to 278 residues: MDVRQSIHSAHAKTLDTQGLHNEFLVEKVFVADEYTMVYSHIDRIIVGGIMPITKTVSVGGEVGKQLGVSYFLERRELGVINIGGAGTITVDGQCYEIGHRDALYVGKGAKEVVFASIDTATPAKFYYNCAPAHTTYPTKKVTPDEVSPVTLGDNLTSNRRTINKYFVPDVLETCQLSMGLTELAPGNLWNTMPCHTHERRMEVYFYFNMDDDACVFHMMGQPQETRHIVMHNEQAVISPSWSIHSGVGTKAYTFIWGMVGENQVFDDMDHVAVKDLR.

Residues histidine 196, histidine 198, glutamate 203, and histidine 245 each coordinate Zn(2+).

It belongs to the KduI family. Zn(2+) is required as a cofactor.

The enzyme catalyses 5-dehydro-4-deoxy-D-glucuronate = 3-deoxy-D-glycero-2,5-hexodiulosonate. Its pathway is glycan metabolism; pectin degradation; 2-dehydro-3-deoxy-D-gluconate from pectin: step 4/5. Its function is as follows. Catalyzes the isomerization of 5-dehydro-4-deoxy-D-glucuronate to 3-deoxy-D-glycero-2,5-hexodiulosonate. This is 4-deoxy-L-threo-5-hexosulose-uronate ketol-isomerase from Shigella boydii serotype 4 (strain Sb227).